A 393-amino-acid chain; its full sequence is MQLHDHMKYIDLGCKMACIPRYQWKGRPTERQFYASEQRIVFLLGTICQIFQITGVLIYWYCNGRLATETGTFVAQLSEMCSSFCLTFVGFCNVYAISTNRNQIETLLEELHQIYPRYRKNHYRCQHYFDMAMTIMRIEFLFYMILYVYYNSAPLWVLLWEHLHEEYDLSFKTQTNTWFPWKVHGSALGFGMAVLSITVGSFVGVGFSIVTQNLICLLTFQLKLHYDGISSQLVSLDCRRPGAHKELSILIAHHSRILQLGDQVNDIMNFVFGSSLVGATIAICMSSVSIMLLDLASAFKYASGLVAFVLYNFVICYMGTEVTLASGKVLPAAFYNNWYEGDLVYRRMLLILMMRATKPYMWKTYKLAPVSITTYMATLKFSYQMFTCVRSLK.

The Cytoplasmic segment spans residues Met1–Arg39. A helical transmembrane segment spans residues Ile40–Trp60. The Extracellular segment spans residues Tyr61–Gln76. The chain crosses the membrane as a helical span at residues Leu77 to Ile97. The Cytoplasmic portion of the chain corresponds to Ser98–Glu139. A helical transmembrane segment spans residues Phe140–Trp160. Residues Glu161–Gly189 are Extracellular-facing. A helical membrane pass occupies residues Phe190 to Val210. The Cytoplasmic segment spans residues Thr211–Asn269. Residues Phe270–Ile290 traverse the membrane as a helical segment. At Met291–Gly304 the chain is on the extracellular side. A helical membrane pass occupies residues Leu305–Ala325. At Ser326–Tyr365 the chain is on the cytoplasmic side. Residues Lys366–Phe386 traverse the membrane as a helical segment. Over Thr387 to Lys393 the chain is Extracellular.

It belongs to the insect chemoreceptor superfamily. Heteromeric odorant receptor channel (TC 1.A.69) family. Or49a subfamily. Interacts with Orco. Complexes exist early in the endomembrane system in olfactory sensory neurons (OSNs), coupling these complexes to the conserved ciliary trafficking pathway. In terms of tissue distribution, expressed in olfactory sensory neurons in the antenna.

The protein resides in the cell membrane. Its function is as follows. Odorant receptor which mediates acceptance or avoidance behavior, depending on its substrates. The odorant receptor repertoire encodes a large collection of odor stimuli that vary widely in identity, intensity, and duration. May form a complex with Orco to form odorant-sensing units, providing sensitive and prolonged odorant signaling and calcium permeability. This Drosophila melanogaster (Fruit fly) protein is Putative odorant receptor 69a, isoform A (Or69a).